The sequence spans 372 residues: M protein, serotype 2.2 (372 aa).

An N-terminal signal peptide occupies residues M1–A41. C repeat units lie at residues A124–H158, K166–Y200, and Q215–L249. Composition is skewed to basic and acidic residues over residues K125–T169, T226–T246, and E260–Q274. 2 disordered regions span residues K125–A191 and E211–Q274. 4 D repeats span residues A275–Q280, G281–E286, A289–E294, and A296–E301. Residues L295–A304 show a composition bias toward basic and acidic residues. The segment at L295 to E344 is disordered. Residues A322–S341 are compositionally biased toward polar residues. The LPXTG sorting signal signature appears at L339–G343. At T342 the chain carries Pentaglycyl murein peptidoglycan amidated threonine. A propeptide spans G343–N372 (removed by sortase).

It belongs to the M protein family.

Its subcellular location is the secreted. It is found in the cell wall. In terms of biological role, this protein is one of the different antigenic serotypes of protein M. Protein M is closely associated with virulence of the bacterium and can render the organism resistant to phagocytosis. This Streptococcus pyogenes protein is M protein, serotype 2.2 (emmL2.2).